Reading from the N-terminus, the 117-residue chain is MARVKRGVVARRRHKKILNQAKGYYGARSRVYRVAKQAVIKAGQYAYRDRRNRKRAFRALWIARINAGARANGLSYSRLIAGLKKANVEIDRKVLADLAMNEQQAFAAVVEKAKASL.

The protein belongs to the bacterial ribosomal protein bL20 family.

Binds directly to 23S ribosomal RNA and is necessary for the in vitro assembly process of the 50S ribosomal subunit. It is not involved in the protein synthesizing functions of that subunit. The polypeptide is Large ribosomal subunit protein bL20 (Marinobacter nauticus (strain ATCC 700491 / DSM 11845 / VT8) (Marinobacter aquaeolei)).